The sequence spans 189 residues: Interferon alpha-12 (189 aa).

Positions methionine 1 to glycine 23 are cleaved as a signal peptide. Disulfide bonds link cysteine 24-cysteine 122 and cysteine 52-cysteine 162. The N-linked (GlcNAc...) asparagine glycan is linked to asparagine 101.

It belongs to the alpha/beta interferon family.

It is found in the secreted. In terms of biological role, produced by macrophages, IFN-alpha have antiviral activities. Interferon stimulates the production of two enzymes: a protein kinase and an oligoadenylate synthetase. This is Interferon alpha-12 (Ifna12) from Mus musculus (Mouse).